The following is a 148-amino-acid chain: Small ribosomal subunit protein uS7m (148 aa).

Belongs to the universal ribosomal protein uS7 family. Part of the small ribosomal subunit.

The protein localises to the mitochondrion. Its function is as follows. One of the primary rRNA binding proteins, it binds directly to 18S rRNA where it nucleates assembly of the head domain of the small subunit. The sequence is that of Small ribosomal subunit protein uS7m (RPS7) from Arabidopsis thaliana (Mouse-ear cress).